The following is a 501-amino-acid chain: Glutamyl-tRNA(Gln) amidotransferase subunit A (501 aa).

Residues Lys80 and Ser155 each act as charge relay system in the active site. The active-site Acyl-ester intermediate is Ser179.

Belongs to the amidase family. GatA subfamily. As to quaternary structure, heterotrimer of A, B and C subunits.

The enzyme catalyses L-glutamyl-tRNA(Gln) + L-glutamine + ATP + H2O = L-glutaminyl-tRNA(Gln) + L-glutamate + ADP + phosphate + H(+). Functionally, allows the formation of correctly charged Gln-tRNA(Gln) through the transamidation of misacylated Glu-tRNA(Gln) in organisms which lack glutaminyl-tRNA synthetase. The reaction takes place in the presence of glutamine and ATP through an activated gamma-phospho-Glu-tRNA(Gln). In Cupriavidus taiwanensis (strain DSM 17343 / BCRC 17206 / CCUG 44338 / CIP 107171 / LMG 19424 / R1) (Ralstonia taiwanensis (strain LMG 19424)), this protein is Glutamyl-tRNA(Gln) amidotransferase subunit A.